A 103-amino-acid chain; its full sequence is MGKLTLLLLAILVWLQYSLWFGKNGIHDYTRVNDDVAALQATNAKLKARNDQLFAEIDDLNGGQEALEERARNELSMTRPGETFYRLVPDASKRAQSAGQNNR.

Residues 1–3 lie on the Cytoplasmic side of the membrane; it reads MGK. A helical transmembrane segment spans residues 4–21; sequence LTLLLLAILVWLQYSLWF. Topologically, residues 22 to 103 are periplasmic; that stretch reads GKNGIHDYTR…RAQSAGQNNR (82 aa). Residues 28 to 71 are a coiled coil; the sequence is DYTRVNDDVAALQATNAKLKARNDQLFAEIDDLNGGQEALEERA.

Belongs to the FtsB family. As to quaternary structure, part of a complex composed of FtsB, FtsL and FtsQ.

The protein localises to the cell inner membrane. Functionally, essential cell division protein. May link together the upstream cell division proteins, which are predominantly cytoplasmic, with the downstream cell division proteins, which are predominantly periplasmic. The protein is Cell division protein FtsB of Shigella flexneri serotype 5b (strain 8401).